The sequence spans 322 residues: Ig gamma-2A chain C region (322 aa).

Ig-like domains lie at 6-98 (PSVY…KKIV), 115-212 (VFIF…KSIS), and 221-317 (PQVY…KSLS). 3 disulfides stabilise this stretch: C27-C82, C136-C196, and C242-C300. N172 carries N-linked (GlcNAc...) asparagine glycosylation.

The polypeptide is Ig gamma-2A chain C region (Igg-2a) (Rattus norvegicus (Rat)).